The following is a 541-amino-acid chain: MAKIIAFDEEARRGLERGLNSLADAVKVTLGPKGRNVVLEKKWGAPTITNDGVSIAKEIELEDPYEKIGAELVKEVAKKTDDVAGDGTTTATVLAQALVREGLRNVAAGANPLGLKRGIEKAVEAVTAKLLDTAKEVETKEQIAATAGISAGDSTIGELIAEAMDKVGKEGVITVEESNSFGLQLELTEGMRFDKGYISLYFATDAERQEAVLEDPYILLVSSKISTVKDLLPLLEKVIQAGKPLLIIAEDVEGEALSTLVVNKIRGTFKSVAVKAPGFGDRRKAQLADIAILTGGEVVSEEVGLSLETAGIELLGRARKVVVTKDETTIVEGAGDADAIAGRVNQIRAEIEASDSDYDREKLQERLAKLAGGVAVIKAGAATEVELKERKHRIEDAVRNAKAAVEEGIVAGGGVALLQSSPVLDDLKLEGDEATGANIVKVALEAPLKQIAFNAGLEPGVVAEKVRNLPAGSGLNAATGEYEDLLAAGINDPVKVTRSALQNAASIAALFLTTEAVVADKPEKAAAPMGDPTGGMGGMDF.

Residues 29-32, 86-90, Gly413, 476-478, and Asp492 each bind ATP; these read TLGP, DGTTT, and NAA.

It belongs to the chaperonin (HSP60) family. As to quaternary structure, forms a cylinder of 14 subunits composed of two heptameric rings stacked back-to-back. Interacts with the co-chaperonin GroES.

The protein localises to the cytoplasm. The catalysed reaction is ATP + H2O + a folded polypeptide = ADP + phosphate + an unfolded polypeptide.. In terms of biological role, together with its co-chaperonin GroES, plays an essential role in assisting protein folding. The GroEL-GroES system forms a nano-cage that allows encapsulation of the non-native substrate proteins and provides a physical environment optimized to promote and accelerate protein folding. The polypeptide is Chaperonin GroEL (Rhodococcus hoagii (Corynebacterium equii)).